Consider the following 100-residue polypeptide: Small ribosomal subunit protein uS14c (100 aa).

The protein belongs to the universal ribosomal protein uS14 family. In terms of assembly, part of the 30S ribosomal subunit.

The protein localises to the plastid. It is found in the chloroplast. Binds 16S rRNA, required for the assembly of 30S particles. The polypeptide is Small ribosomal subunit protein uS14c (Cucumis sativus (Cucumber)).